The primary structure comprises 512 residues: ATP synthase subunit alpha (512 aa).

An ATP-binding site is contributed by 169–176 (GDRQTGKT).

Belongs to the ATPase alpha/beta chains family. As to quaternary structure, F-type ATPases have 2 components, CF(1) - the catalytic core - and CF(0) - the membrane proton channel. CF(1) has five subunits: alpha(3), beta(3), gamma(1), delta(1), epsilon(1). CF(0) has three main subunits: a(1), b(2) and c(9-12). The alpha and beta chains form an alternating ring which encloses part of the gamma chain. CF(1) is attached to CF(0) by a central stalk formed by the gamma and epsilon chains, while a peripheral stalk is formed by the delta and b chains.

It is found in the cell inner membrane. The enzyme catalyses ATP + H2O + 4 H(+)(in) = ADP + phosphate + 5 H(+)(out). Its function is as follows. Produces ATP from ADP in the presence of a proton gradient across the membrane. The alpha chain is a regulatory subunit. The protein is ATP synthase subunit alpha of Orientia tsutsugamushi (strain Ikeda) (Rickettsia tsutsugamushi).